A 488-amino-acid chain; its full sequence is Zinc metalloproteinase-disintegrin agkistin (488 aa).

A signal peptide spans Met1–Ser20. The propeptide occupies Ile21–Phe195. One can recognise a Peptidase M12B domain in the interval Arg198–Asn394. Residue Glu201 participates in Ca(2+) binding. A glycan (N-linked (GlcNAc...) asparagine) is linked at Asn258. Residue Asp285 coordinates Ca(2+). 3 cysteine pairs are disulfide-bonded: Cys309/Cys391, Cys349/Cys373, and Cys351/Cys356. His334 contacts Zn(2+). Glu335 is an active-site residue. 2 residues coordinate Zn(2+): His338 and His344. The Ca(2+) site is built by Cys391, Asn394, Val406, Asn409, Glu413, Glu416, and Asp419. The 85-residue stretch at Pro404–Ala488 folds into the Disintegrin domain. Disulfide bonds link Cys407–Cys426, Cys418–Cys436, Cys420–Cys431, Cys430–Cys453, Cys444–Cys450, Cys449–Cys474, and Cys462–Cys481. Residues Arg466–Asp468 carry the Cell attachment site motif.

The protein belongs to the venom metalloproteinase (M12B) family. P-II subfamily. P-IIb sub-subfamily. In terms of assembly, monomer. Zn(2+) serves as cofactor. Expressed by the venom gland.

The protein localises to the secreted. In terms of biological role, inhibits ADP-induced human platelet aggregation, inhibits bovine aortic endothelial cells (BAEC) migration, has anti-angiogenic activity and induces BAEC and human micro-vascular endothelial cell (HMEC) apoptosis. The metalloproteinase domain may act in hemorrhage. This chain is Zinc metalloproteinase-disintegrin agkistin, found in Gloydius halys (Chinese water mocassin).